The chain runs to 356 residues: NADH-quinone oxidoreductase subunit H (356 aa).

The next 9 membrane-spanning stretches (helical) occupy residues 22–42 (GVVS…TAYL), 59–79 (PSLA…KLVF), 93–113 (FIIA…VIPI), 124–144 (IGGI…IIIA), 171–191 (MALS…IQIV), 198–218 (PIWL…SILA), 240–260 (VEYS…NMIL), 285–305 (IPGY…FLWI), and 321–341 (GLKV…TILV).

It belongs to the complex I subunit 1 family. NDH-1 is composed of 14 different subunits. Subunits NuoA, H, J, K, L, M, N constitute the membrane sector of the complex.

It is found in the cell inner membrane. It carries out the reaction a quinone + NADH + 5 H(+)(in) = a quinol + NAD(+) + 4 H(+)(out). NDH-1 shuttles electrons from NADH, via FMN and iron-sulfur (Fe-S) centers, to quinones in the respiratory chain. The immediate electron acceptor for the enzyme in this species is believed to be ubiquinone. Couples the redox reaction to proton translocation (for every two electrons transferred, four hydrogen ions are translocated across the cytoplasmic membrane), and thus conserves the redox energy in a proton gradient. This subunit may bind ubiquinone. This Orientia tsutsugamushi (strain Boryong) (Rickettsia tsutsugamushi) protein is NADH-quinone oxidoreductase subunit H.